A 184-amino-acid chain; its full sequence is Isopentenyl-diphosphate Delta-isomerase (184 aa).

Residues histidine 25 and histidine 32 each contribute to the Mn(2+) site. Positions 30-164 (PLHLAFSCWL…PWAFSPWMVL (135 aa)) constitute a Nudix hydrolase domain. Residue cysteine 67 is part of the active site. Histidine 69 serves as a coordination point for Mn(2+). Position 87 (glutamate 87) interacts with Mg(2+). Mn(2+) is bound by residues glutamate 114 and glutamate 116. Glutamate 116 is an active-site residue.

The protein belongs to the IPP isomerase type 1 family. In terms of assembly, homodimer. Requires Mg(2+) as cofactor. Mn(2+) is required as a cofactor.

The protein localises to the cytoplasm. It catalyses the reaction isopentenyl diphosphate = dimethylallyl diphosphate. Its pathway is isoprenoid biosynthesis; dimethylallyl diphosphate biosynthesis; dimethylallyl diphosphate from isopentenyl diphosphate: step 1/1. Functionally, catalyzes the 1,3-allylic rearrangement of the homoallylic substrate isopentenyl (IPP) to its highly electrophilic allylic isomer, dimethylallyl diphosphate (DMAPP). In Klebsiella pneumoniae subsp. pneumoniae (strain ATCC 700721 / MGH 78578), this protein is Isopentenyl-diphosphate Delta-isomerase.